Reading from the N-terminus, the 628-residue chain is Beta-lactamase-like protein 1 (628 aa).

Residues 1 to 28 form the signal peptide; it reads MKNILSFSFSFSFLYILFLLLFLNNNLL. N-linked (GlcNAc...) asparagine glycosylation is found at asparagine 45, asparagine 68, asparagine 198, and asparagine 241. The segment covering 245 to 281 has biased composition (low complexity); that stretch reads NNNNNNNNNNNNNNNNNNNNNNNNNNNNNNNNNNNNN. The interval 245 to 285 is disordered; that stretch reads NNNNNNNNNNNNNNNNNNNNNNNNNNNNNNNNNNNNNKIKT. N-linked (GlcNAc...) asparagine glycosylation is found at asparagine 313 and asparagine 335. Residues 494–516 form a disordered region; the sequence is EKEEKEEEEENQQDESQQQQQQQ. Over residues 496 to 506 the composition is skewed to acidic residues; it reads EEKEEEEENQQ. The span at 507–516 shows a compositional bias: low complexity; that stretch reads DESQQQQQQQ.

Belongs to the beta-lactamase family.

The protein localises to the secreted. The protein is Beta-lactamase-like protein 1 of Dictyostelium discoideum (Social amoeba).